Consider the following 663-residue polypeptide: Syntabulin (663 aa).

Disordered stretches follow at residues M1–K202 and V216–Y267. Positions G2–E417 are sufficient for interaction with KIF5B. S50 carries the phosphoserine modification. Over residues F57–S73 the composition is skewed to low complexity. Positions C81–G97 are enriched in polar residues. Position 107 is a phosphoserine (S107). 3 stretches are compositionally biased toward low complexity: residues E145–S158, S188–S198, and S221–S241. Residues L271 to K353 are a coiled coil. Residues R310 to E417 are sufficient for interaction with STX1A. Phosphoserine occurs at positions 396 and 555. A helical membrane pass occupies residues S606–F626.

Interacts with STX1A and KIF5B. Isoform 3, isoform 4 and isoform 5 are expressed in HeLa cell line (at protein level). Isoform 3 is expressed in fetal and adult brain. Isoform 4 is expressed in numerous fetal tissues (brain, kidney, liver, lung, and thymus) and in adult brain, kidney, liver, lung, pancreas, colon, prostate, small intestine, testis and thymus. Isoform 5 is expressed in fetal brain, brain and small intestine.

It localises to the cytoplasm. It is found in the cytoskeleton. The protein localises to the cytoplasmic vesicle. Its subcellular location is the golgi apparatus membrane. Its function is as follows. Part of a kinesin motor-adapter complex that is critical for the anterograde axonal transport of active zone components and contributes to activity-dependent presynaptic assembly during neuronal development. This is Syntabulin (SYBU) from Homo sapiens (Human).